The chain runs to 573 residues: MLO-like protein 2 (573 aa).

The Extracellular segment spans residues 1 to 15; sequence MADQVKERTLEETST. Residues 16–36 form a helical membrane-spanning segment; it reads WAVAVVCFVLLFISIVLEHSI. Topologically, residues 37 to 61 are cytoplasmic; that stretch reads HKIGTWFKKKHKQALFEALEKVKAE. Residues 62–82 traverse the membrane as a helical segment; sequence LMLLGFISLLLTIGQTPISNI. The Extracellular portion of the chain corresponds to 83-164; the sequence is CISQKVASTM…VSAYGIHQLH (82 aa). The chain crosses the membrane as a helical span at residues 165 to 185; that stretch reads IFIFVLAVVHVVYCIVTYAFG. The Cytoplasmic segment spans residues 186–287; the sequence is KIKMRTWKSW…KYIQRSLEKD (102 aa). The chain crosses the membrane as a helical span at residues 288-308; the sequence is FKTVVEISPVIWFVAVLFLLT. The Extracellular segment spans residues 309–317; that stretch reads NSYGLRSYL. Residues 318–338 form a helical membrane-spanning segment; it reads WLPFIPLVVILIVGTKLEVII. Residues 339-371 lie on the Cytoplasmic side of the membrane; sequence TKLGLRIQEKGDVVRGAPVVQPGDDLFWFGKPR. Residues 372 to 392 traverse the membrane as a helical segment; the sequence is FILFLIHLVLFTNAFQLAFFA. At 393–415 the chain is on the extracellular side; sequence WSTYEFNLNNCFHESTADVVIRL. Residues 416 to 436 form a helical membrane-spanning segment; it reads VVGAVVQILCSYVTLPLYALV. Residues 437-573 are Cytoplasmic-facing; the sequence is TQMGSKMKPT…KSLRDFSFKK (137 aa). The segment at 450-471 is calmodulin-binding; the sequence is DRVATALKKWHHTAKNETKHGR. Positions 462-573 are disordered; the sequence is TAKNETKHGR…KSLRDFSFKK (112 aa). Polar residues-rich tracts occupy residues 473–490 and 498–513; these read SGSNTPFSSRPTTPTHGS and NFNNRSVENYPSSPSP. Phosphoserine is present on S512. Basic and acidic residues predominate over residues 522 to 548; it reads EHQFWDPESQHQEAETSTHHSLAHESS.

It belongs to the MLO family.

Its subcellular location is the membrane. Functionally, may be involved in modulation of pathogen defense and leaf cell death. Activity seems to be regulated by Ca(2+)-dependent calmodulin binding and seems not to require heterotrimeric G proteins. In Arabidopsis thaliana (Mouse-ear cress), this protein is MLO-like protein 2 (MLO2).